We begin with the raw amino-acid sequence, 643 residues long: NAD-dependent malic enzyme, mitochondrial (643 aa).

Residues 1 to 38 constitute a mitochondrion transit peptide; sequence PRVRSFIAHQSGITSVIRRSPDIAHRMVRSLSVSSQRN. Residues Gln-116, Arg-119, and Arg-143 each coordinate fumarate. Tyr-164 acts as the Proton donor in catalysis. Arg-219 provides a ligand contact to (S)-malate. Arg-219 is a binding site for NAD(+). Catalysis depends on Lys-237, which acts as the Proton acceptor. The a divalent metal cation site is built by Glu-309 and Asp-310. NAD(+)-binding residues include Asn-313, Asp-333, Ala-366, Ala-369, and Asn-472. Asp-333 lines the a divalent metal cation pocket. Residues Asn-472 and Asn-516 each coordinate (S)-malate.

It belongs to the malic enzymes family. As to quaternary structure, homotetramer. It depends on Mg(2+) as a cofactor. The cofactor is Mn(2+).

It localises to the mitochondrion matrix. The enzyme catalyses (S)-malate + NAD(+) = pyruvate + CO2 + NADH. It carries out the reaction oxaloacetate + H(+) = pyruvate + CO2. Its activity is regulated as follows. Subject to allosteric activation by fumarate. NAD-dependent mitochondrial malic enzyme that catalyzes the oxidative decarboxylation of malate to pyruvate. The sequence is that of NAD-dependent malic enzyme, mitochondrial from Ascaris suum (Pig roundworm).